Reading from the N-terminus, the 276-residue chain is 4-chlorobenzoyl coenzyme A dehalogenase-1 (276 aa).

Residue 66–71 (AGFDLE) participates in substrate binding. Residue His93 is the Proton acceptor of the active site. Gly117 serves as a coordination point for substrate. Asp148 functions as the Nucleophile in the catalytic mechanism. Arg261 contributes to the substrate binding site.

It belongs to the enoyl-CoA hydratase/isomerase family. In terms of assembly, homotetramer.

It carries out the reaction 4-chlorobenzoyl-CoA + H2O = 4-hydroxybenzoyl-CoA + chloride + H(+). The protein operates within xenobiotic degradation; 4-chlorobenzoate degradation; 4-hydroxybenzoate from 4-chlorobenzoate: step 2/3. In terms of biological role, dehalogenates 4-chlorobenzoyl-CoA, 4-iodobenzoyl-CoA, 4-bromobenzoyl-CoA and, at a slower rate, 4-fluorobenzoyl-CoA. Does not dehalogenate 2-chlorobenzoyl-CoA or 3-chlorobenzoyl-CoA. The sequence is that of 4-chlorobenzoyl coenzyme A dehalogenase-1 from Arthrobacter sp.